A 111-amino-acid polypeptide reads, in one-letter code: Cytochrome c (111 aa).

Residue A1 is modified to N-acetylalanine. Residues C22, C25, and H26 each contribute to the heme c site. The residue at position 80 (K80) is an N6,N6,N6-trimethyllysine. Residue M88 coordinates heme c. N6,N6,N6-trimethyllysine is present on K94.

Belongs to the cytochrome c family. In terms of processing, binds 1 heme c group covalently per subunit.

It is found in the mitochondrion intermembrane space. Its function is as follows. Electron carrier protein. The oxidized form of the cytochrome c heme group can accept an electron from the heme group of the cytochrome c1 subunit of cytochrome reductase. Cytochrome c then transfers this electron to the cytochrome oxidase complex, the final protein carrier in the mitochondrial electron-transport chain. The protein is Cytochrome c of Nigella damascena (Love-in-a-mist).